The following is a 280-amino-acid chain: Undecaprenyl-diphosphatase (280 aa).

The next 8 helical transmembrane spans lie at 3–23 (IILLIQAVIMGIVEGITEFLP), 45–65 (VDLFVVVVQFGAILAVIYDYW), 88–108 (QLGLSLIVATIPVMIVGFTFA), 115–135 (LFDPIVVAIMLIIGGLLIFYV), 150–170 (VGLKTALMIGLFQCLALIPGT), 191–211 (AEFSFFLGIPVIVGAALLDLL), 225–245 (VLGIGTVVSFIVALLCIRLLV), and 255–275 (IFAWLRIITGVLVLIAAWGFG).

Belongs to the UppP family.

It localises to the cell inner membrane. The catalysed reaction is di-trans,octa-cis-undecaprenyl diphosphate + H2O = di-trans,octa-cis-undecaprenyl phosphate + phosphate + H(+). In terms of biological role, catalyzes the dephosphorylation of undecaprenyl diphosphate (UPP). Confers resistance to bacitracin. This chain is Undecaprenyl-diphosphatase, found in Psychrobacter arcticus (strain DSM 17307 / VKM B-2377 / 273-4).